Reading from the N-terminus, the 73-residue chain is Translational regulator CsrA (73 aa).

It belongs to the CsrA/RsmA family. Homodimer; the beta-strands of each monomer intercalate to form a hydrophobic core, while the alpha-helices form wings that extend away from the core.

The protein resides in the cytoplasm. Its function is as follows. A translational regulator that binds mRNA to regulate translation initiation and/or mRNA stability. Usually binds in the 5'-UTR at or near the Shine-Dalgarno sequence preventing ribosome-binding, thus repressing translation. Its main target seems to be the major flagellin gene, while its function is anatagonized by FliW. The sequence is that of Translational regulator CsrA from Thermosipho africanus (strain TCF52B).